The following is a 285-amino-acid chain: RNase adapter protein RapZ (285 aa).

8–15 (GRSGSGKS) lines the ATP pocket. 56–59 (DVRN) provides a ligand contact to GTP. The interval 266–285 (RSRGKNVQSRHRTLEKRKPS) is RNA-binding.

It belongs to the RapZ-like family. RapZ subfamily. In terms of assembly, homotrimer.

Modulates the synthesis of GlmS, by affecting the processing and stability of the regulatory small RNA GlmZ. When glucosamine-6-phosphate (GlcN6P) concentrations are high in the cell, RapZ binds GlmZ and targets it to cleavage by RNase E. Consequently, GlmZ is inactivated and unable to activate GlmS synthesis. Under low GlcN6P concentrations, RapZ is sequestered and inactivated by an other regulatory small RNA, GlmY, preventing GlmZ degradation and leading to synthesis of GlmS. This Pectobacterium atrosepticum (strain SCRI 1043 / ATCC BAA-672) (Erwinia carotovora subsp. atroseptica) protein is RNase adapter protein RapZ.